A 311-amino-acid chain; its full sequence is tRNA dimethylallyltransferase (311 aa).

Residue 13–20 (GPTASGKT) coordinates ATP. Substrate is bound at residue 15 to 20 (TASGKT). Interaction with substrate tRNA stretches follow at residues 38–41 (DSMQ) and 166–170 (QRVLR).

The protein belongs to the IPP transferase family. Monomer. Mg(2+) is required as a cofactor.

It carries out the reaction adenosine(37) in tRNA + dimethylallyl diphosphate = N(6)-dimethylallyladenosine(37) in tRNA + diphosphate. In terms of biological role, catalyzes the transfer of a dimethylallyl group onto the adenine at position 37 in tRNAs that read codons beginning with uridine, leading to the formation of N6-(dimethylallyl)adenosine (i(6)A). In Staphylococcus aureus (strain MRSA252), this protein is tRNA dimethylallyltransferase.